A 177-amino-acid polypeptide reads, in one-letter code: SPbeta prophage-derived uncharacterized protein YopI (177 aa).

A helical membrane pass occupies residues 11 to 31 (FEGIIGALLGVIVTLILTHIL).

It localises to the cell membrane. This Bacillus subtilis (strain 168) protein is SPbeta prophage-derived uncharacterized protein YopI (yopI).